The primary structure comprises 662 residues: MINRITDNKFKLVSKYQPSGDQPQAIEQLVDNIEGGEKAQILMGATGTGKTYTMSQVISKVNKPTLVIAHNKTLAGQLYGEFKEFFPENAVEYFVSYYDYYQPEAYVPSSDTYIEKDSSVNDEIDKLRHSATSALLERNDVIVVASVSCIYGLGSPKEYADSVVSLRPGLEISRDKLLNDLVDIQFERNDIDFQRGRFRVRGDVVEIFPASRDEHAFRVEFFGDEIDRIREVEALTGQVLGEVDHLAIFPATHFVTNDDHMEVAIAKIQAELEEQLAVFEKEGKLLEAQRLKQRTEYDIEMLREMGYTNGVENYSRHMDGRSEGEPPYTLLDFFPDDFLIMIDESHMTMGQIKGMYNGDRSRKEMLVNYGFRLPSALDNRPLRREEFESHVHQIVYVSATPGDYENEQTETVIEQIIRPTGLLDPEVEVRPTMGQIDDLLGEINARVEKNERTFITTLTKKMAEDLTDYFKEMGIKVKYMHSDIKTLERTEIIRDLRLGVFDVLVGINLLREGIDVPEVSLVAILDADKEGFLRNERGLIQTIGRAARNSEGHVIMYADTVTQSMQRAIDETARRRKIQMAYNEEHGIVPQTIKKEIRDLIAVTKAVSKEEDKEVDINSLNKQERKELVKKLEKQMQEAVEVLDFELAAQIRDMMLEVKALD.

Residues 31-188 enclose the Helicase ATP-binding domain; that stretch reads DNIEGGEKAQ…NDLVDIQFER (158 aa). 44–51 provides a ligand contact to ATP; that stretch reads GATGTGKT. A Beta-hairpin motif is present at residues 97-120; sequence YYDYYQPEAYVPSSDTYIEKDSSV. A Helicase C-terminal domain is found at 435-601; sequence QIDDLLGEIN…TIKKEIRDLI (167 aa). The UVR domain maps to 626 to 661; it reads KELVKKLEKQMQEAVEVLDFELAAQIRDMMLEVKAL.

The protein belongs to the UvrB family. As to quaternary structure, forms a heterotetramer with UvrA during the search for lesions. Interacts with UvrC in an incision complex.

Its subcellular location is the cytoplasm. The UvrABC repair system catalyzes the recognition and processing of DNA lesions. A damage recognition complex composed of 2 UvrA and 2 UvrB subunits scans DNA for abnormalities. Upon binding of the UvrA(2)B(2) complex to a putative damaged site, the DNA wraps around one UvrB monomer. DNA wrap is dependent on ATP binding by UvrB and probably causes local melting of the DNA helix, facilitating insertion of UvrB beta-hairpin between the DNA strands. Then UvrB probes one DNA strand for the presence of a lesion. If a lesion is found the UvrA subunits dissociate and the UvrB-DNA preincision complex is formed. This complex is subsequently bound by UvrC and the second UvrB is released. If no lesion is found, the DNA wraps around the other UvrB subunit that will check the other stand for damage. This chain is UvrABC system protein B, found in Streptococcus pneumoniae (strain Taiwan19F-14).